Here is a 131-residue protein sequence, read N- to C-terminus: Small ribosomal subunit protein uS12 (131 aa).

Aspartate 89 carries the 3-methylthioaspartic acid modification.

Belongs to the universal ribosomal protein uS12 family. In terms of assembly, part of the 30S ribosomal subunit. Contacts proteins S8 and S17. May interact with IF1 in the 30S initiation complex.

Its function is as follows. With S4 and S5 plays an important role in translational accuracy. Interacts with and stabilizes bases of the 16S rRNA that are involved in tRNA selection in the A site and with the mRNA backbone. Located at the interface of the 30S and 50S subunits, it traverses the body of the 30S subunit contacting proteins on the other side and probably holding the rRNA structure together. The combined cluster of proteins S8, S12 and S17 appears to hold together the shoulder and platform of the 30S subunit. This chain is Small ribosomal subunit protein uS12, found in Campylobacter concisus (strain 13826).